The following is a 310-amino-acid chain: Cytochrome P450 monooxygenase ppzG (310 aa).

Residue cysteine 288 participates in heme binding.

Belongs to the cytochrome P450 family. Heme is required as a cofactor.

It participates in secondary metabolite biosynthesis. Cytochrome P450 monooxygenase; part of the gene cluster that mediates the biosynthesis of pyrrolopyrazines, secondary metabolites showing insecticidal activity. The role of ppzG within the pathway has still to be determined. The single multifunctional NRPS ppzA is sufficient to produce peramine via condensation of 1-pyrroline-5-carboxylate and arginine, N-methylation of the alpha-amino group of arginine and reduction of the thioester and the cyclization to form an iminium ion resulting in release from the peptide synthetase. Deprotonation of this intermediate and oxidation of the pyrroline ring would give rise to peramine. In Epichloe species that produce only peramine, the peramine synthetase gene is not localized in a gene cluster, in contrast to Metarhizium species that contain additional pyrrolopyrazine biosynthesis genes. The 2-oxoglutarate-Fe(II) type oxidoreductase ppzC hydroxylates peramine to yield the newly identified compound 8-hydroxyperamine whereas ppzD converts L-proline into trans-4-hydroxy-L-proline, a precursor of peramine biosynthesis. The protein is Cytochrome P450 monooxygenase ppzG (ppzG) of Metarhizium majus (strain ARSEF 297).